A 561-amino-acid polypeptide reads, in one-letter code: Trehalose-6-phosphate hydrolase (561 aa).

Asp203 acts as the Nucleophile in catalysis. Catalysis depends on Glu254, which acts as the Proton donor.

Belongs to the glycosyl hydrolase 13 family.

It is found in the cytoplasm. The catalysed reaction is alpha,alpha-trehalose 6-phosphate + H2O = D-glucose 6-phosphate + D-glucose. With respect to regulation, activity is stimulated by high salt concentrations with different efficiencies depending on the kind of salt. In vitro, inhibited by glucose. Functionally, hydrolyzes trehalose-6-phosphate to glucose and glucose 6-phosphate. Can also very effectively hydrolyze p-nitrophenyl-alpha-D-glucopyranoside, but not lactose, maltose, sucrose or sucrose-6-phosphate. Trehalose is also hydrolyzed, but to a much smaller extent than trehalose-6-phosphate. The sequence is that of Trehalose-6-phosphate hydrolase from Bacillus subtilis (strain 168).